The primary structure comprises 152 residues: Deoxyuridine 5'-triphosphate nucleotidohydrolase (152 aa).

Residues Arg65–Gly67, Asn78, and Thr82–Asp84 each bind substrate.

It belongs to the dUTPase family. The cofactor is Mg(2+).

It catalyses the reaction dUTP + H2O = dUMP + diphosphate + H(+). It participates in pyrimidine metabolism; dUMP biosynthesis; dUMP from dCTP (dUTP route): step 2/2. Functionally, this enzyme is involved in nucleotide metabolism: it produces dUMP, the immediate precursor of thymidine nucleotides and it decreases the intracellular concentration of dUTP so that uracil cannot be incorporated into DNA. The polypeptide is Deoxyuridine 5'-triphosphate nucleotidohydrolase (Chlorobaculum tepidum (strain ATCC 49652 / DSM 12025 / NBRC 103806 / TLS) (Chlorobium tepidum)).